A 79-amino-acid chain; its full sequence is Beta-defensin 15 (79 aa).

An N-terminal signal peptide occupies residues 1-20; it reads MKTFLFLFAVFFFLDPAKNA. 3 disulfides stabilise this stretch: Cys-26–Cys-53, Cys-33–Cys-47, and Cys-37–Cys-54.

Belongs to the beta-defensin family.

The protein localises to the secreted. Has antibacterial activity. The sequence is that of Beta-defensin 15 (Defb15) from Rattus norvegicus (Rat).